The following is a 375-amino-acid chain: Succinyl-diaminopimelate desuccinylase (375 aa).

H66 provides a ligand contact to Zn(2+). D68 is an active-site residue. D99 provides a ligand contact to Zn(2+). The active-site Proton acceptor is the E133. Positions 134, 162, and 348 each coordinate Zn(2+).

It belongs to the peptidase M20A family. DapE subfamily. As to quaternary structure, homodimer. Zn(2+) is required as a cofactor. Co(2+) serves as cofactor.

It carries out the reaction N-succinyl-(2S,6S)-2,6-diaminopimelate + H2O = (2S,6S)-2,6-diaminopimelate + succinate. Its pathway is amino-acid biosynthesis; L-lysine biosynthesis via DAP pathway; LL-2,6-diaminopimelate from (S)-tetrahydrodipicolinate (succinylase route): step 3/3. Catalyzes the hydrolysis of N-succinyl-L,L-diaminopimelic acid (SDAP), forming succinate and LL-2,6-diaminopimelate (DAP), an intermediate involved in the bacterial biosynthesis of lysine and meso-diaminopimelic acid, an essential component of bacterial cell walls. This Escherichia coli O157:H7 protein is Succinyl-diaminopimelate desuccinylase.